A 456-amino-acid polypeptide reads, in one-letter code: Toxin CfTX-1 (456 aa).

Residues 1 to 20 form the signal peptide; sequence MVKMLFFAFLPLLFMTGIAA.

The protein belongs to the jellyfish toxin family. Type I subfamily. As to quaternary structure, oligomer. Post-translationally, contains disulfide bonds. As to expression, nematocytes.

Its subcellular location is the secreted. It is found in the nematocyst. It localises to the target cell membrane. Functionally, may cause profound effects on the cardiovascular system of anesthetized rats (at 25 ug/kg), since the fraction containing this toxin and CfTX-2 produces an initial increase in mean arterial pressure, followed by cardiovascular collapse in all animals within 1 minute of injection. To note, the same fraction does not induce significant change in heart rate. Has weak hemolytic activity. Is lethal to crayfish. Causes cutaneous inflammation in humans. May act as a pore-forming toxin, disrupting normal transmembrane ion concentration gradients in susceptible cells. The chain is Toxin CfTX-1 from Chironex fleckeri (Australian box jellyfish).